The chain runs to 160 residues: Mediator of RNA polymerase II transcription subunit 31 (160 aa).

Residues 124-160 (GTGIENEQGGTEANNPGEAEGEQTKGTADQQDGSSKT) are disordered. Over residues 147–160 (TKGTADQQDGSSKT) the composition is skewed to polar residues.

The protein belongs to the Mediator complex subunit 31 family. As to quaternary structure, component of the Mediator complex.

It localises to the nucleus. Functionally, component of the Mediator complex, a coactivator involved in the regulated transcription of nearly all RNA polymerase II-dependent genes. Mediator functions as a bridge to convey information from gene-specific regulatory proteins to the basal RNA polymerase II transcription machinery. Mediator is recruited to promoters by direct interactions with regulatory proteins and serves as a scaffold for the assembly of a functional preinitiation complex with RNA polymerase II and the general transcription factors. This Aspergillus terreus (strain NIH 2624 / FGSC A1156) protein is Mediator of RNA polymerase II transcription subunit 31 (soh1).